Here is a 482-residue protein sequence, read N- to C-terminus: Anaerobic nitric oxide reductase flavorubredoxin (482 aa).

The tract at residues Leu30–Ile210 is zinc metallo-hydrolase. Fe cation-binding residues include His79, Glu81, Asp83, His147, Asp166, and His227. Positions Ile254–Ala393 constitute a Flavodoxin-like domain. FMN-binding positions include Thr260–Asn264 and Ala342–Leu369. Positions Gly426–Leu477 constitute a Rubredoxin-like domain. The Fe cation site is built by Cys431, Cys434, Cys464, and Cys467.

This sequence in the N-terminal section; belongs to the zinc metallo-hydrolase group 3 family. As to quaternary structure, homotetramer. Requires Fe cation as cofactor. It depends on FMN as a cofactor.

It is found in the cytoplasm. It participates in nitrogen metabolism; nitric oxide reduction. Anaerobic nitric oxide reductase; uses NADH to detoxify nitric oxide (NO), protecting several 4Fe-4S NO-sensitive enzymes. Has at least 2 reductase partners, only one of which (NorW, flavorubredoxin reductase) has been identified. NO probably binds to the di-iron center; electrons enter from the NorW at rubredoxin and are transferred sequentially to the FMN center and the di-iron center. Also able to function as an aerobic oxygen reductase. The chain is Anaerobic nitric oxide reductase flavorubredoxin from Citrobacter koseri (strain ATCC BAA-895 / CDC 4225-83 / SGSC4696).